We begin with the raw amino-acid sequence, 81 residues long: ATP synthase subunit c, chloroplastic (81 aa).

2 helical membrane-spanning segments follow: residues 3–23 (PIIC…GAIG) and 57–77 (LAFM…IIFA).

Belongs to the ATPase C chain family. As to quaternary structure, F-type ATPases have 2 components, F(1) - the catalytic core - and F(0) - the membrane proton channel. F(1) has five subunits: alpha(3), beta(3), gamma(1), delta(1), epsilon(1). F(0) has four main subunits: a(1), b(1), b'(1) and c(10-14). The alpha and beta chains form an alternating ring which encloses part of the gamma chain. F(1) is attached to F(0) by a central stalk formed by the gamma and epsilon chains, while a peripheral stalk is formed by the delta, b and b' chains.

The protein localises to the plastid. It is found in the chloroplast thylakoid membrane. Functionally, f(1)F(0) ATP synthase produces ATP from ADP in the presence of a proton or sodium gradient. F-type ATPases consist of two structural domains, F(1) containing the extramembraneous catalytic core and F(0) containing the membrane proton channel, linked together by a central stalk and a peripheral stalk. During catalysis, ATP synthesis in the catalytic domain of F(1) is coupled via a rotary mechanism of the central stalk subunits to proton translocation. In terms of biological role, key component of the F(0) channel; it plays a direct role in translocation across the membrane. A homomeric c-ring of between 10-14 subunits forms the central stalk rotor element with the F(1) delta and epsilon subunits. The sequence is that of ATP synthase subunit c, chloroplastic from Euglena gracilis.